An 899-amino-acid chain; its full sequence is Inositol 1,4,5-triphosphate receptor associated 1 (899 aa).

4 disordered regions span residues 32–110 (PGTH…HRHL), 164–286 (RRGR…PLQH), 324–391 (KTAR…EEPG), and 463–486 (AAEQDKGVSPELAPAAEEEESKSG). The span at 100–110 (SPHRRLSHRHL) shows a compositional bias: basic residues. Phosphoserine is present on S106. Residues 140 to 172 (SEEDKKKNLALLEEAKLVSERFLTRRGRKSRSS) are interaction with PRKG1. Residues 171 to 180 (SSLGDSPSAV) are compositionally biased toward polar residues. The segment covering 181-203 (SPNLSSGASPASSRSCSLTISTS) has biased composition (low complexity). The span at 266–281 (TVEKTKELTVEQKENF) shows a compositional bias: basic and acidic residues. Polar residues predominate over residues 333–351 (PRTTAQGSGGTVSPHSLGQ). S382 bears the Phosphoserine mark. An interaction with ITPR1 region spans residues 521–567 (NVFVQLSLAFRNDSYTLESRINQAERERNLTEENTEKELENFKASIT). A coiled-coil region spans residues 534 to 632 (SYTLESRINQ…MQYVENLKRT (99 aa)). Residues S670 and S683 each carry the phosphoserine modification. 2 disordered regions span residues 695–722 (LPGQAPSSSPMPSLPALSESSNGKSSIS) and 757–818 (TSQE…DQGS). Over residues 699–715 (APSSSPMPSLPALSESS) the composition is skewed to low complexity. Basic and acidic residues-rich tracts occupy residues 759–770 (QETKAKAEEEAY) and 777–787 (GVKKTEELQDL). Residues 788–814 (KEEEEEEQKTESPEEPEEVEETQEDEK) show a composition bias toward acidic residues. A helical membrane pass occupies residues 839 to 859 (WQVIWMMAAVMLVLSVVLGLY). A disordered region spans residues 867-899 (EEADGPPGRSTCSAAQRDSWWSSGLQQELPAEQ). The span at 876–892 (STCSAAQRDSWWSSGLQ) shows a compositional bias: polar residues.

As to quaternary structure, part of cGMP kinase signaling complex at least composed of ACTA2/alpha-actin, CNN1/calponin H1, PLN/phospholamban, PRKG1 and ITPR1. Interacts with PRKG1/cGKI-beta and ITPR1/IP3R type I. Interacts with HCN4; regulates HCN4 channel activity. Phosphorylated by PRKG1/cGKI. In terms of tissue distribution, highly expressed in smooth muscle such as aorta, colon and uterus. Detected in the brain, in the thalamus, in the hippocampus and myenteric plexus. Highly expressed in megakaryocytes. Down-regulated during macrophage differentiation.

The protein localises to the membrane. It is found in the cytoplasm. Its subcellular location is the perinuclear region. It localises to the sarcoplasmic reticulum. In terms of biological role, plays a role as NO/PRKG1-dependent regulator of IP3-induced calcium release; its phosphorylation by PRKG1 inhibits bradykinin and IP3-induced calcium release from intracellular stores. Recruits PRKG1 to the endoplasmic reticulum and may mediate the assembly of PRKG1 and ITPR1 in a macrocomplex. Involved in PRKG1 signaling cascade leading to inhibition of platelet activation and aggregation. Also mediates NO-dependent inhibition of calcium signaling in gastrointestinal smooth muscle contributing to NO-dependent relaxation. Plays a role in the regulation of cellular excitability by regulating the hyperpolarization-activated cyclic nucleotide-gated HCN4 channel activity. The chain is Inositol 1,4,5-triphosphate receptor associated 1 (Irag1) from Mus musculus (Mouse).